Reading from the N-terminus, the 660-residue chain is WD repeat-containing protein 48 homolog (660 aa).

8 WD repeats span residues 23–78, 84–120, 123–162, 174–213, 216–255, 258–297, 300–341, and 362–401; these read MHRS…RDLH, HHTD…CMST, THRD…KLTA, GNKD…KLMK, GHTD…CISS, CHSE…TAQL, IEDA…ISVE, and PGAA…KVCD.

Belongs to the WD repeat WDR48 family.

Regulator of deubiquitinating complexes. Activates deubiquitination by increasing the catalytic turnover without increasing the affinity of deubiquitinating enzymes for the substrate. The polypeptide is WD repeat-containing protein 48 homolog (Brugia malayi (Filarial nematode worm)).